The sequence spans 545 residues: Threonine--tRNA ligase catalytic subunit (545 aa).

The catalytic stretch occupies residues 139 to 433; sequence DHRLIGEKLD…LLEHFKGKLP (295 aa). 3 residues coordinate Zn(2+): cysteine 231, histidine 282, and histidine 410.

This sequence belongs to the class-II aminoacyl-tRNA synthetase family. In terms of assembly, homodimer. Probably interacts with its editing subunit. Zn(2+) is required as a cofactor.

The protein localises to the cytoplasm. The enzyme catalyses tRNA(Thr) + L-threonine + ATP = L-threonyl-tRNA(Thr) + AMP + diphosphate + H(+). Its function is as follows. Catalyzes the attachment of threonine to tRNA(Thr) in a two-step reaction: L-threonine is first activated by ATP to form Thr-AMP and then transferred to the acceptor end of tRNA(Thr). Also activates L-serine and transfers it to tRNA(Thr) but cannot deacylate incorrectly charged amino acid; unlike most archaea the editing function is found in a freestanding protein. The chain is Threonine--tRNA ligase catalytic subunit from Saccharolobus islandicus (strain M.16.27) (Sulfolobus islandicus).